The following is a 486-amino-acid chain: Regulatory protein ViaA (486 aa).

Belongs to the ViaA family. In terms of assembly, homodimer. Interacts with RavA.

It localises to the cytoplasm. Its function is as follows. Component of the RavA-ViaA chaperone complex, which may act on the membrane to optimize the function of some of the respiratory chains. ViaA stimulates the ATPase activity of RavA. This is Regulatory protein ViaA from Erwinia tasmaniensis (strain DSM 17950 / CFBP 7177 / CIP 109463 / NCPPB 4357 / Et1/99).